A 90-amino-acid polypeptide reads, in one-letter code: Protein E18 (90 aa).

A helical transmembrane segment spans residues 27–47 (PNMFLTILAVVVIIALIIIFV).

It localises to the virion membrane. Component of the polyhedra envelope. Plays an essential role in the budded virus production. The protein is Protein E18 (E18) of Autographa californica nuclear polyhedrosis virus (AcMNPV).